Consider the following 220-residue polypeptide: Protein-L-isoaspartate O-methyltransferase (220 aa).

The active site involves Ser68.

The protein belongs to the methyltransferase superfamily. L-isoaspartyl/D-aspartyl protein methyltransferase family.

It localises to the cytoplasm. The enzyme catalyses [protein]-L-isoaspartate + S-adenosyl-L-methionine = [protein]-L-isoaspartate alpha-methyl ester + S-adenosyl-L-homocysteine. Its function is as follows. Catalyzes the methyl esterification of L-isoaspartyl residues in peptides and proteins that result from spontaneous decomposition of normal L-aspartyl and L-asparaginyl residues. It plays a role in the repair and/or degradation of damaged proteins. The chain is Protein-L-isoaspartate O-methyltransferase from Dictyoglomus turgidum (strain DSM 6724 / Z-1310).